The chain runs to 327 residues: tRNA dimethylallyltransferase (327 aa).

Residue 14–21 (GPTASGKT) coordinates ATP. 16 to 21 (TASGKT) serves as a coordination point for substrate. Interaction with substrate tRNA regions lie at residues 39-42 (DSAL) and 163-167 (QRIQR).

The protein belongs to the IPP transferase family. In terms of assembly, monomer. Mg(2+) is required as a cofactor.

It catalyses the reaction adenosine(37) in tRNA + dimethylallyl diphosphate = N(6)-dimethylallyladenosine(37) in tRNA + diphosphate. Its function is as follows. Catalyzes the transfer of a dimethylallyl group onto the adenine at position 37 in tRNAs that read codons beginning with uridine, leading to the formation of N6-(dimethylallyl)adenosine (i(6)A). This is tRNA dimethylallyltransferase from Xanthomonas oryzae pv. oryzae (strain PXO99A).